Reading from the N-terminus, the 303-residue chain is Glucosyl-3-phosphoglycerate synthase (303 aa).

UDP-alpha-D-glucose contacts are provided by residues 35 to 39 (PALNE), S66, K99, and 119 to 120 (DS). Residue D121 participates in Mn(2+) binding. 166 to 169 (GRVT) is a binding site for (2R)-3-phosphoglycerate. Residues 211 to 214 (YGVE) and 238 to 243 (RAHRNR) contribute to the UDP-alpha-D-glucose site. Position 240 (H240) interacts with Mn(2+). N242 is a (2R)-3-phosphoglycerate binding site.

The protein belongs to the glycosyltransferase 2 family. As to quaternary structure, homotrimer. Mg(2+) serves as cofactor. Mn(2+) is required as a cofactor.

The catalysed reaction is an NDP-alpha-D-glucose + (2R)-3-phosphoglycerate = (2R)-2-O-(alpha-D-glucopyranosyl)-3-phospho-glycerate + a ribonucleoside 5'-diphosphate + H(+). The enzyme catalyses (2R)-3-phosphoglycerate + UDP-alpha-D-glucose = (2R)-2-O-(alpha-D-glucopyranosyl)-3-phospho-glycerate + UDP + H(+). It catalyses the reaction ADP-alpha-D-glucose + (2R)-3-phosphoglycerate = (2R)-2-O-(alpha-D-glucopyranosyl)-3-phospho-glycerate + ADP + H(+). It carries out the reaction GDP-D-glucose + (2R)-3-phosphoglycerate = (2R)-2-O-(alpha-D-glucopyranosyl)-3-phospho-glycerate + GDP + H(+). Functionally, involved in the biosynthesis of 6-O-methylglucose lipopolysaccarides (MGLPs). Catalyzes the transfer of the glucose moiety from a nuleotide sugar such as UDP-alpha-D-glucose to the position 2 of 3-phospho-D-glycerate (3-PGA) to form glucosyl-3-phosphoglycerate (GPG). It can use UDP-glucose, ADP-glucose and GDP-glucose as sugar donor substrates with decreasing affinity and with 3-PGA as an acceptor. D-glycerate can only be an acceptor with ADP-glucose and at a very low rate. The protein is Glucosyl-3-phosphoglycerate synthase (gpgS) of Mycolicibacterium smegmatis (strain ATCC 700084 / mc(2)155) (Mycobacterium smegmatis).